Consider the following 155-residue polypeptide: Protein-export protein SecB (155 aa).

The protein belongs to the SecB family. As to quaternary structure, homotetramer, a dimer of dimers. One homotetramer interacts with 1 SecA dimer.

It localises to the cytoplasm. In terms of biological role, one of the proteins required for the normal export of preproteins out of the cell cytoplasm. It is a molecular chaperone that binds to a subset of precursor proteins, maintaining them in a translocation-competent state. It also specifically binds to its receptor SecA. The chain is Protein-export protein SecB from Klebsiella pneumoniae subsp. pneumoniae (strain ATCC 700721 / MGH 78578).